The chain runs to 235 residues: Golgi to ER traffic protein 1 (235 aa).

Residue M1 is a topological domain, lumenal. A helical transmembrane segment spans residues 2–21; that stretch reads HWAAAVAIFFIVVTKFLQYT. The Cytoplasmic segment spans residues 22–104; the sequence is NKYHEKWISK…AFQAHLHKLR (83 aa). Positions 68 to 104 form a coiled coil; the sequence is WTKNNRKLDSLDKEINNLKDEIQSENKAFQAHLHKLR. A helical transmembrane segment spans residues 105–125; that stretch reads LLALTVPFFVFKIMYGKTPVY. Over 126–181 the chain is Lumenal; the sequence is KLSSSTSTLFPTFVSGVWSQGWLYVLLHPLRTISQKWHIMEGKFGASKFDDMALQS. A helical transmembrane segment spans residues 182 to 198; it reads VSLGIWVWALMNVINGV. The Cytoplasmic portion of the chain corresponds to 199-235; it reads EFIVKQLFLTPKMEAPASVETQEEKALDAVDDAIILD.

The protein belongs to the WRB/GET1 family. In terms of assembly, component of the Golgi to ER traffic (GET) complex, which is composed of GET1, GET2 and GET3. Within the complex, GET1 and GET2 form a heterotetramer which is stabilized by phosphatidylinositol binding and which binds to the GET3 homodimer.

The protein resides in the endoplasmic reticulum membrane. It is found in the golgi apparatus membrane. Its function is as follows. Required for the post-translational delivery of tail-anchored (TA) proteins to the endoplasmic reticulum. Together with GET2, acts as a membrane receptor for soluble GET3, which recognizes and selectively binds the transmembrane domain of TA proteins in the cytosol. The GET complex cooperates with the HDEL receptor ERD2 to mediate the ATP-dependent retrieval of resident ER proteins that contain a C-terminal H-D-E-L retention signal from the Golgi to the ER. The chain is Golgi to ER traffic protein 1 from Saccharomyces cerevisiae (strain RM11-1a) (Baker's yeast).